A 252-amino-acid polypeptide reads, in one-letter code: Probable transcriptional regulator SauR (252 aa).

The region spanning 6-68 (NAAAVRAFRI…AGNRHYECSS (63 aa)) is the HTH iclR-type domain. The H-T-H motif DNA-binding region spans 28 to 47 (LAAIVQAIELPKQTVHRILK). The 170-residue stretch at 83–252 (PAAARHAILQ…ADEMVKTFCE (170 aa)) folds into the IclR-ED domain.

Its function is as follows. May regulate transcription of the sauSTU operon. This Cupriavidus necator (strain ATCC 17699 / DSM 428 / KCTC 22496 / NCIMB 10442 / H16 / Stanier 337) (Ralstonia eutropha) protein is Probable transcriptional regulator SauR (sauR).